Here is a 332-residue protein sequence, read N- to C-terminus: NADH-quinone oxidoreductase subunit H (332 aa).

9 consecutive transmembrane segments (helical) span residues 4–24, 44–64, 78–98, 120–140, 165–185, 194–214, 255–275, 279–299, and 312–332; these read FAFF…IFAS, IGPD…MIKL, FIFA…LAAI, VALL…FLGG, VGAL…LVDI, FSWL…ALFI, IAGA…FWII, IMMI…RAAF, and YLIL…AVLL.

Belongs to the complex I subunit 1 family. As to quaternary structure, NDH-1 is composed of 14 different subunits. Subunits NuoA, H, J, K, L, M, N constitute the membrane sector of the complex.

It localises to the cell inner membrane. It carries out the reaction a quinone + NADH + 5 H(+)(in) = a quinol + NAD(+) + 4 H(+)(out). Its function is as follows. NDH-1 shuttles electrons from NADH, via FMN and iron-sulfur (Fe-S) centers, to quinones in the respiratory chain. The immediate electron acceptor for the enzyme in this species is believed to be ubiquinone. Couples the redox reaction to proton translocation (for every two electrons transferred, four hydrogen ions are translocated across the cytoplasmic membrane), and thus conserves the redox energy in a proton gradient. This subunit may bind ubiquinone. The polypeptide is NADH-quinone oxidoreductase subunit H (Campylobacter jejuni (strain RM1221)).